Consider the following 182-residue polypeptide: Inosine/xanthosine triphosphatase (182 aa).

Residues aspartate 38 and glutamate 68 each coordinate Mg(2+). 68 to 69 (EA) is a binding site for substrate.

Belongs to the YjjX NTPase family. Homodimer. Mg(2+) is required as a cofactor. Requires Mn(2+) as cofactor.

The catalysed reaction is XTP + H2O = XDP + phosphate + H(+). It catalyses the reaction ITP + H2O = IDP + phosphate + H(+). Phosphatase that hydrolyzes non-canonical purine nucleotides such as XTP and ITP to their respective diphosphate derivatives. Probably excludes non-canonical purines from DNA/RNA precursor pool, thus preventing their incorporation into DNA/RNA and avoiding chromosomal lesions. This chain is Inosine/xanthosine triphosphatase, found in Erwinia tasmaniensis (strain DSM 17950 / CFBP 7177 / CIP 109463 / NCPPB 4357 / Et1/99).